We begin with the raw amino-acid sequence, 318 residues long: Pantothenate synthetase (318 aa).

Position 44 to 51 (44 to 51) interacts with ATP; sequence MGALHQGH. Residue His-51 is the Proton donor of the active site. Residue Gln-75 coordinates (R)-pantoate. Gln-75 serves as a coordination point for beta-alanine. 161 to 164 is a binding site for ATP; sequence GEKD. Gln-167 is a (R)-pantoate binding site. ATP-binding positions include Val-190 and 198 to 201; that span reads LSSR. Residues 295–318 are disordered; sequence DGHPNLDSQPEPAGTDPALLPPAR.

This sequence belongs to the pantothenate synthetase family. As to quaternary structure, homodimer.

The protein resides in the cytoplasm. The catalysed reaction is (R)-pantoate + beta-alanine + ATP = (R)-pantothenate + AMP + diphosphate + H(+). Its pathway is cofactor biosynthesis; (R)-pantothenate biosynthesis; (R)-pantothenate from (R)-pantoate and beta-alanine: step 1/1. Catalyzes the condensation of pantoate with beta-alanine in an ATP-dependent reaction via a pantoyl-adenylate intermediate. The sequence is that of Pantothenate synthetase from Nocardia farcinica (strain IFM 10152).